The sequence spans 1088 residues: RNA-directed RNA polymerase (1088 aa).

A RdRp catalytic domain is found at 501–687; it reads LSYGDVTRFL…AKRYIAGGKI (187 aa).

It belongs to the reoviridae RNA-directed RNA polymerase family. In terms of assembly, interacts with VP3 (Potential). Interacts with VP2; this interaction activates VP1. Interacts with NSP5; this interaction is probably necessary for the formation of functional virus factories. Interacts with NSP2; this interaction is weak. Mg(2+) is required as a cofactor.

Its subcellular location is the virion. It carries out the reaction RNA(n) + a ribonucleoside 5'-triphosphate = RNA(n+1) + diphosphate. Functionally, RNA-directed RNA polymerase that is involved in both transcription and genome replication. Together with VP3 capping enzyme, forms an enzyme complex positioned near the channels situated at each of the five-fold vertices of the core. Following infection, the outermost layer of the virus is lost, leaving a double-layered particle (DLP) made up of the core and VP6 shell. VP1 then catalyzes the transcription of fully conservative plus-strand genomic RNAs that are extruded through the DLP's channels into the cytoplasm where they function as mRNAs for translation of viral proteins. One copy of each of the viral (+)RNAs is also recruited during core assembly, together with newly synthesized polymerase complexes and VP2. The polymerase of these novo-formed particles catalyzes the synthesis of complementary minus-strands leading to dsRNA formation. To do so, the polymerase specifically recognizes and binds 4 bases 5'-UGUG-3' in the conserved 3'-sequence of plus-strand RNA templates. VP2 presumably activates the autoinhibited VP1-RNA complex to coordinate packaging and genome replication. Once dsRNA synthesis is complete, the polymerase switches to the transcriptional mode, thus providing secondary transcription. The chain is RNA-directed RNA polymerase from Homo sapiens (Human).